The primary structure comprises 83 residues: Weak neurotoxin WNTX33 (83 aa).

Residues 1–21 (MKTLLLTLVVVTIVCLDLGYS) form the signal peptide. 4 cysteine pairs are disulfide-bonded: Cys24/Cys45, Cys38/Cys62, Cys64/Cys75, and Cys76/Cys81.

It belongs to the three-finger toxin family. Short-chain subfamily. In terms of tissue distribution, expressed by the venom gland.

It localises to the secreted. In Ophiophagus hannah (King cobra), this protein is Weak neurotoxin WNTX33.